The primary structure comprises 504 residues: Maturase K (504 aa).

Belongs to the intron maturase 2 family. MatK subfamily.

It is found in the plastid. Its subcellular location is the chloroplast. In terms of biological role, usually encoded in the trnK tRNA gene intron. Probably assists in splicing its own and other chloroplast group II introns. The polypeptide is Maturase K (Alliaria petiolata (Garlic mustard)).